Consider the following 757-residue polypeptide: Catalase-peroxidase 2 (757 aa).

Positions M1 to A26 are cleaved as a signal peptide. Positions W126 to Y248 form a cross-link, tryptophyl-tyrosyl-methioninium (Trp-Tyr) (with M-274). Residue H127 is the Proton acceptor of the active site. The tryptophyl-tyrosyl-methioninium (Tyr-Met) (with W-126) cross-link spans Y248–M274. H289 provides a ligand contact to heme b.

This sequence belongs to the peroxidase family. Peroxidase/catalase subfamily. Homodimer or homotetramer. The cofactor is heme b. In terms of processing, formation of the three residue Trp-Tyr-Met cross-link is important for the catalase, but not the peroxidase activity of the enzyme.

The catalysed reaction is H2O2 + AH2 = A + 2 H2O. It catalyses the reaction 2 H2O2 = O2 + 2 H2O. Its function is as follows. Bifunctional enzyme with both catalase and broad-spectrum peroxidase activity. The protein is Catalase-peroxidase 2 of Shewanella frigidimarina (strain NCIMB 400).